We begin with the raw amino-acid sequence, 350 residues long: Phosphoribosylformylglycinamidine cyclo-ligase (350 aa).

Belongs to the AIR synthase family.

The protein resides in the cytoplasm. The catalysed reaction is 2-formamido-N(1)-(5-O-phospho-beta-D-ribosyl)acetamidine + ATP = 5-amino-1-(5-phospho-beta-D-ribosyl)imidazole + ADP + phosphate + H(+). Its pathway is purine metabolism; IMP biosynthesis via de novo pathway; 5-amino-1-(5-phospho-D-ribosyl)imidazole from N(2)-formyl-N(1)-(5-phospho-D-ribosyl)glycinamide: step 2/2. This chain is Phosphoribosylformylglycinamidine cyclo-ligase, found in Cupriavidus pinatubonensis (strain JMP 134 / LMG 1197) (Cupriavidus necator (strain JMP 134)).